A 469-amino-acid chain; its full sequence is Glutamate--tRNA ligase (469 aa).

A 'HIGH' region motif is present at residues Pro-9–Gly-19. The 'KMSKS' region signature appears at Lys-236 to Arg-240. Lys-239 serves as a coordination point for ATP.

Belongs to the class-I aminoacyl-tRNA synthetase family. Glutamate--tRNA ligase type 1 subfamily. As to quaternary structure, monomer.

The protein localises to the cytoplasm. The enzyme catalyses tRNA(Glu) + L-glutamate + ATP = L-glutamyl-tRNA(Glu) + AMP + diphosphate. In terms of biological role, catalyzes the attachment of glutamate to tRNA(Glu) in a two-step reaction: glutamate is first activated by ATP to form Glu-AMP and then transferred to the acceptor end of tRNA(Glu). This chain is Glutamate--tRNA ligase, found in Shewanella amazonensis (strain ATCC BAA-1098 / SB2B).